Here is a 404-residue protein sequence, read N- to C-terminus: Cytoplasmic tRNA 2-thiolation protein 2 (404 aa).

Belongs to the CTU2/NCS2 family.

The protein localises to the cytoplasm. The protein operates within tRNA modification; 5-methoxycarbonylmethyl-2-thiouridine-tRNA biosynthesis. In terms of biological role, plays a central role in 2-thiolation of mcm(5)S(2)U at tRNA wobble positions of tRNA(Lys), tRNA(Glu) and tRNA(Gln). May act by forming a heterodimer with NCS6/CTU1 that ligates sulfur from thiocarboxylated URM1 onto the uridine of tRNAs at wobble position. This is Cytoplasmic tRNA 2-thiolation protein 2 from Drosophila yakuba (Fruit fly).